Reading from the N-terminus, the 427-residue chain is MQQHELSSSRFVSTLTKNTVALILAGGKGSRLRDLTNWTAKPAVPFGGKFRIIDFPLSNCINSGVRRIGVVTQYKAHTLIQHIQRGWGFLRGEFNEFVELLPAQQRIQEEWYKGTADAVFQNLDILRQTNIEFVLILAGDHVYKMDYGQMLAAHVRNKADMTVACINVPLKEASAFGVMGVDENDRVVDFEEKPAHPSSLPDDPDHALASMGIYVFNAAFLYEQLIRDADDPKSSHDFGHDIIPYLIKKYRVFAHRFTDSCVGAADGNYYWRDVGTVDAYWEANMELTKVVPELNLYDRQWPIWTYQEQLPPAKFVFDNEERRGQATDSLISGGCIVSGANVRNSVLFSDVRVNSYSSIEQSVILPKVDIGRHVTLRRVVVDSGARIPDGMEIGVNLELDRKRFHITEQGVVLVTPDMLGQNLHHIR.

Residues tyrosine 112, glycine 177, 192 to 193 (EK), and serine 210 contribute to the alpha-D-glucose 1-phosphate site.

Belongs to the bacterial/plant glucose-1-phosphate adenylyltransferase family. As to quaternary structure, homotetramer.

It catalyses the reaction alpha-D-glucose 1-phosphate + ATP + H(+) = ADP-alpha-D-glucose + diphosphate. The protein operates within glycan biosynthesis; glycogen biosynthesis. In terms of biological role, involved in the biosynthesis of ADP-glucose, a building block required for the elongation reactions to produce glycogen. Catalyzes the reaction between ATP and alpha-D-glucose 1-phosphate (G1P) to produce pyrophosphate and ADP-Glc. This is Glucose-1-phosphate adenylyltransferase from Methylobacillus flagellatus (strain ATCC 51484 / DSM 6875 / VKM B-1610 / KT).